A 156-amino-acid polypeptide reads, in one-letter code: 6,7-dimethyl-8-ribityllumazine synthase (156 aa).

5-amino-6-(D-ribitylamino)uracil contacts are provided by residues F22, 57-59 (AYE), and 81-83 (TVI). 86-87 (GT) contacts (2S)-2-hydroxy-3-oxobutyl phosphate. Catalysis depends on H89, which acts as the Proton donor. F114 contacts 5-amino-6-(D-ribitylamino)uracil. R128 contacts (2S)-2-hydroxy-3-oxobutyl phosphate.

This sequence belongs to the DMRL synthase family. As to quaternary structure, forms an icosahedral capsid composed of 60 subunits, arranged as a dodecamer of pentamers.

The catalysed reaction is (2S)-2-hydroxy-3-oxobutyl phosphate + 5-amino-6-(D-ribitylamino)uracil = 6,7-dimethyl-8-(1-D-ribityl)lumazine + phosphate + 2 H2O + H(+). It participates in cofactor biosynthesis; riboflavin biosynthesis; riboflavin from 2-hydroxy-3-oxobutyl phosphate and 5-amino-6-(D-ribitylamino)uracil: step 1/2. Functionally, catalyzes the formation of 6,7-dimethyl-8-ribityllumazine by condensation of 5-amino-6-(D-ribitylamino)uracil with 3,4-dihydroxy-2-butanone 4-phosphate. This is the penultimate step in the biosynthesis of riboflavin. This is 6,7-dimethyl-8-ribityllumazine synthase from Proteus mirabilis (strain HI4320).